The following is a 24-amino-acid chain: Gaegurin-6 (24 aa).

Cys18 and Cys24 are joined by a disulfide.

This sequence belongs to the frog skin active peptide (FSAP) family. Brevinin subfamily. As to quaternary structure, monomer. As to expression, expressed by the skin glands.

Its subcellular location is the secreted. Functionally, has a non-hemolytic activity. Has a broad spectrum of activity against both Gram-positive and Gram-negative bacteria, fungi and protozoa. This is Gaegurin-6 (GGN6) from Glandirana rugosa (Japanese wrinkled frog).